The primary structure comprises 525 residues: GMP synthase [glutamine-hydrolyzing] (525 aa).

The Glutamine amidotransferase type-1 domain maps to Arg9–Leu207. Cys86 (nucleophile) is an active-site residue. Catalysis depends on residues His181 and Glu183. One can recognise a GMPS ATP-PPase domain in the interval Trp208–Arg400. Ser235 to Ser241 serves as a coordination point for ATP.

In terms of assembly, homodimer.

It catalyses the reaction XMP + L-glutamine + ATP + H2O = GMP + L-glutamate + AMP + diphosphate + 2 H(+). Its pathway is purine metabolism; GMP biosynthesis; GMP from XMP (L-Gln route): step 1/1. Functionally, catalyzes the synthesis of GMP from XMP. The chain is GMP synthase [glutamine-hydrolyzing] from Salmonella schwarzengrund (strain CVM19633).